The chain runs to 475 residues: Sulfate adenylyltransferase subunit 1 (475 aa).

The tr-type G domain maps to 25–239 (KSLLRFLTCG…EVLETVEIQR (215 aa)). The interval 34–41 (GSVDDGKS) is G1. Residue 34–41 (GSVDDGKS) participates in GTP binding. A G2 region spans residues 92-96 (GITID). Residues 113–116 (DTPG) form a G3 region. GTP contacts are provided by residues 113-117 (DTPGH) and 168-171 (NKMD). The interval 168-171 (NKMD) is G4. Positions 206–208 (SAL) are G5.

Belongs to the TRAFAC class translation factor GTPase superfamily. Classic translation factor GTPase family. CysN/NodQ subfamily. As to quaternary structure, heterodimer composed of CysD, the smaller subunit, and CysN.

The enzyme catalyses sulfate + ATP + H(+) = adenosine 5'-phosphosulfate + diphosphate. It participates in sulfur metabolism; hydrogen sulfide biosynthesis; sulfite from sulfate: step 1/3. Its function is as follows. With CysD forms the ATP sulfurylase (ATPS) that catalyzes the adenylation of sulfate producing adenosine 5'-phosphosulfate (APS) and diphosphate, the first enzymatic step in sulfur assimilation pathway. APS synthesis involves the formation of a high-energy phosphoric-sulfuric acid anhydride bond driven by GTP hydrolysis by CysN coupled to ATP hydrolysis by CysD. This is Sulfate adenylyltransferase subunit 1 from Shigella flexneri.